The sequence spans 420 residues: Succinate--CoA ligase [GDP-forming] subunit beta, mitochondrial (420 aa).

One can recognise an ATP-grasp domain in the interval 35–263 (KSLMDKYGVN…NASFRQKEIF (229 aa)). Residues glutamine 46, 78 to 80 (GRG), and valine 135 contribute to the GTP site. Asparagine 232 and aspartate 246 together coordinate Mg(2+). Residues asparagine 297 and 354–356 (GIM) each bind substrate.

It belongs to the succinate/malate CoA ligase beta subunit family. GTP-specific subunit beta subfamily. In terms of assembly, heterodimer of an alpha and a beta subunit. The beta subunit determines specificity for GTP. The cofactor is Mg(2+).

It is found in the mitochondrion. It carries out the reaction GTP + succinate + CoA = succinyl-CoA + GDP + phosphate. The protein operates within carbohydrate metabolism; tricarboxylic acid cycle; succinate from succinyl-CoA (ligase route): step 1/1. In terms of biological role, GTP-specific succinyl-CoA synthetase functions in the citric acid cycle (TCA), coupling the hydrolysis of succinyl-CoA to the synthesis of GTP and thus represents the only step of substrate-level phosphorylation in the TCA. The beta subunit provides nucleotide specificity of the enzyme and binds the substrate succinate, while the binding sites for coenzyme A and phosphate are found in the alpha subunit. This is Succinate--CoA ligase [GDP-forming] subunit beta, mitochondrial (scsB) from Dictyostelium discoideum (Social amoeba).